A 529-amino-acid chain; its full sequence is uncharacterized protein (529 aa).

Residues 178 to 186 (TSGTTGQPK), aspartate 401, arginine 416, and lysine 510 each bind ATP.

It belongs to the ATP-dependent AMP-binding enzyme family.

This is an uncharacterized protein from Bacillus subtilis (strain 168).